A 124-amino-acid polypeptide reads, in one-letter code: Small ribosomal subunit protein uS12 (124 aa).

Asp89 carries the post-translational modification 3-methylthioaspartic acid. The tract at residues 105–124 (QGVKNRGQARSRYGAKKEKK) is disordered. A compositionally biased stretch (basic residues) spans 111–124 (GQARSRYGAKKEKK).

This sequence belongs to the universal ribosomal protein uS12 family. Part of the 30S ribosomal subunit. Contacts proteins S8 and S17. May interact with IF1 in the 30S initiation complex.

Its function is as follows. With S4 and S5 plays an important role in translational accuracy. In terms of biological role, interacts with and stabilizes bases of the 16S rRNA that are involved in tRNA selection in the A site and with the mRNA backbone. Located at the interface of the 30S and 50S subunits, it traverses the body of the 30S subunit contacting proteins on the other side and probably holding the rRNA structure together. The combined cluster of proteins S8, S12 and S17 appears to hold together the shoulder and platform of the 30S subunit. This Micrococcus luteus (Micrococcus lysodeikticus) protein is Small ribosomal subunit protein uS12.